We begin with the raw amino-acid sequence, 2170 residues long: ATP-binding cassette sub-family A member 7 (2170 aa).

The chain crosses the membrane as a helical span at residues Pro-22 to Val-42. Residues Arg-43 to Ser-547 lie on the Extracellular side of the membrane. Cys-75 and Cys-222 are disulfide-bonded. The N-linked (GlcNAc...) asparagine glycan is linked to Asn-309. 6 consecutive transmembrane segments (helical) span residues Leu-548 to Val-568, Leu-591 to Val-611, Val-624 to Leu-644, Leu-653 to Val-673, Leu-679 to Cys-699, and Ala-733 to Cys-753. An ABC transporter 1 domain is found at Val-805–Val-1036. Residue Gly-839 to Thr-846 participates in ATP binding. The chain crosses the membrane as a helical span at residues Thr-847 to Gly-867. Residues Thr-1044–Asp-1086 form a disordered region. The segment covering His-1045 to Thr-1066 has biased composition (basic and acidic residues). A helical transmembrane segment spans residues Ile-1257–Phe-1277. The Extracellular portion of the chain corresponds to Gly-1278–Leu-1562. A disulfide bridge connects residues Cys-1370 and Cys-1384. A run of 6 helical transmembrane segments spans residues Val-1563–Ile-1583, Phe-1609–Ala-1629, Leu-1646–Phe-1666, Val-1674–Leu-1694, Ile-1708–Met-1728, and Ile-1754–Leu-1774. Positions Leu-1818–Arg-2050 constitute an ABC transporter 2 domain. Gly-1852–Thr-1859 provides a ligand contact to ATP. Residues Gln-2129 to Ile-2170 form a disordered region.

This sequence belongs to the ABC transporter superfamily. ABCA family. Post-translationally, N-glycosylated. In terms of tissue distribution, expressed in blood cells. Also detected in brain and ovary tissues (at protein level). Expressed in platelet.

It localises to the cell membrane. It is found in the golgi apparatus membrane. The protein localises to the early endosome membrane. Its subcellular location is the cell projection. The protein resides in the ruffle membrane. It localises to the phagocytic cup. It is found in the cytoplasm. Functionally, ATP-binding cassette (ABC) transporter that plays a role in lipid homeostasis and macrophage-mediated phagocytosis. Binds APOA1 and may function in apolipoprotein-mediated phospholipid efflux from cells. May also mediate cholesterol efflux. May regulate cellular ceramide homeostasis during keratinocyte differentiation. Involved in lipid raft organization and CD1D localization on thymocytes and antigen-presenting cells, which plays an important role in natural killer T-cell development and activation. Plays a role in phagocytosis of apoptotic cells by macrophages. Macrophage phagocytosis is stimulated by APOA1 or APOA2, probably by stabilization of ABCA7. Also involved in phagocytic clearance of amyloid-beta by microglia cells and macrophages. Further limits amyloid-beta production by playing a role in the regulation of amyloid-beta A4 precursor protein (APP) endocytosis and/or processing. This chain is ATP-binding cassette sub-family A member 7 (Abca7), found in Rattus norvegicus (Rat).